Here is a 77-residue protein sequence, read N- to C-terminus: Conotoxin Lt7.1 (77 aa).

The first 19 residues, 1 to 19, serve as a signal peptide directing secretion; the sequence is MEKLTILLLVAALLMSTQG. Positions 20-49 are excised as a propeptide; the sequence is LIQSGGENRPKEKIKFLSKRKTVAESWWEG. Intrachain disulfides connect C51–C65, C58–C69, and C64–C74.

Belongs to the conotoxin O2 superfamily. As to expression, expressed by the venom duct.

The protein resides in the secreted. This chain is Conotoxin Lt7.1, found in Conus litteratus (Lettered cone).